Consider the following 758-residue polypeptide: Microtubule-associated protein tau (758 aa).

Residues Met1–Gln26 are compositionally biased toward basic and acidic residues. The segment at Met1–Val573 is disordered. An N-acetylalanine modification is found at Ala2. The residue at position 18 (Tyr18) is a Phosphotyrosine; by FYN. Tyr29 bears the Phosphotyrosine mark. Lys44 participates in a covalent cross-link: Glycyl lysine isopeptide (Lys-Gly) (interchain with G-Cter in ubiquitin). Phosphoserine occurs at positions 46 and 61. A compositionally biased stretch (polar residues) spans Ser61–Thr71. Phosphothreonine is present on residues Thr69 and Thr71. An N-linked (Glc) (glycation) lysine; in PHF-tau; in vitro glycan is attached at Lys87. Thr111 bears the Phosphothreonine mark. Basic and acidic residues-rich tracts occupy residues Glu179–Lys189 and Gly207–Glu216. Residue Ser214 is modified to Phosphoserine; by SGK1. Residues Glu217–Ser228 are compositionally biased toward acidic residues. Residues Glu314–Gly323 are compositionally biased toward basic and acidic residues. Residues Arg324–Pro340 are compositionally biased toward low complexity. Basic and acidic residues-rich tracts occupy residues Glu344–Glu356 and Lys381–Ala393. Lys383 carries N-linked (Glc) (glycation) lysine; in PHF-tau; in vitro glycosylation. Residues Val442 to Gly453 show a composition bias toward low complexity. Residues Lys455–Thr466 are compositionally biased toward basic and acidic residues. N-linked (Glc) (glycation) lysine; in PHF-tau; in vitro glycosylation is present at Lys467. Thr470 carries the phosphothreonine; by PDPK1 modification. An Omega-N-methylarginine modification is found at Arg472. Lys480 is a glycosylation site (N-linked (Glc) (glycation) lysine; in PHF-tau; in vitro). Position 480 is an N6,N6-dimethyllysine; alternate (Lys480). Lys480 is modified (N6-acetyllysine; alternate). Asn484 bears the Deamidated asparagine; in tau and PHF-tau; partial mark. Thr486 is modified (phosphothreonine). N-linked (Glc) (glycation) lysine; in PHF-tau; in vitro glycosylation occurs at Lys491. Pro residues predominate over residues Lys491–Gly503. Thr492 carries the phosphothreonine modification. Phosphothreonine; by PDPK1 is present on Thr498. 3 positions are modified to phosphoserine: Ser502, Ser508, and Ser512. The span at Glu504–Ser531 shows a compositional bias: low complexity. Tyr514 is modified (phosphotyrosine; by TTBK1). Ser515 and Ser516 each carry phosphoserine; by PDPK1 and TTBK1. Ser519 carries the post-translational modification Phosphoserine; by CK1, PDPK1 and TTBK1. Thr522 is subject to Phosphothreonine; by CK1 and PDPK1. A glycan (O-linked (GlcNAc) serine) is linked at Ser525. Residue Thr529 is modified to Phosphothreonine; by BRSK1, BRSK2, DYRK2 and PDPK1. Ser531 is modified (phosphoserine; by PKA). At Thr534 the chain carries Phosphothreonine; by PDPK1. A glycan (N-linked (Glc) (glycation) lysine; in PHF-tau; in vitro) is linked at Lys542. Lys542 is modified (N6-acetyllysine). The residue at position 548 (Thr548) is a Phosphothreonine; by GSK3-beta and PDPK1. Lys551 is a glycosylation site (N-linked (Glc) (glycation) lysine; in PHF-tau; in vitro). Ser552 is subject to Phosphoserine; by PDPK1. Position 554 is a phosphoserine; by PHK (Ser554). An O-linked (GlcNAc) serine glycan is attached at Ser555. 4 Tau/MAP repeats span residues Gln561 to Lys591, Val592 to Ser622, Val623 to Gln653, and Val654 to Asn685. The microtubule-binding domain stretch occupies residues Gln561–Asn685. A Glycyl lysine isopeptide (Lys-Gly) (interchain with G-Cter in ubiquitin); in PHF-tau cross-link involves residue Lys571. Residue Lys576 is glycosylated (N-linked (Glc) (glycation) lysine; in PHF-tau; in vitro). Lys576 carries the N6-acetyllysine; alternate modification. Position 576 is an N6-methyllysine; alternate (Lys576). Lys576 participates in a covalent cross-link: Glycyl lysine isopeptide (Lys-Gly) (interchain with G-Cter in ubiquitin); alternate. The residue at position 579 (Ser579) is a Phosphoserine; by MARK1, MARK2, MARK3, MARK4, BRSK1, BRSK2 and PHK. Residue Lys584 forms a Glycyl lysine isopeptide (Lys-Gly) (interchain with G-Cter in ubiquitin) linkage. At Asn596 the chain carries Deamidated asparagine; in tau and PHF-tau; partial. 2 N-linked (Glc) (glycation) lysine; in PHF-tau; in vitro glycosylation sites follow: Lys597 and Lys598. N6-acetyllysine; alternate is present on Lys598. Residue Lys598 forms a Glycyl lysine isopeptide (Lys-Gly) (interchain with G-Cter in ubiquitin); alternate linkage. Residue Ser602 is modified to Phosphoserine; by PHK. Lys607 is modified (N6-acetyllysine). A disulfide bridge connects residues Cys608 and Cys639. A Phosphoserine modification is found at Ser610. Residue Lys615 is modified to N6-acetyllysine; alternate. Lys615 participates in a covalent cross-link: Glycyl lysine isopeptide (Lys-Gly) (interchain with G-Cter in ubiquitin); alternate. A Phosphoserine; by PHK modification is found at Ser622. Lys628 carries the post-translational modification N6,N6-dimethyllysine; alternate. Residues Lys628, Lys634, and Lys638 each carry the N6-acetyllysine; alternate modification. Residue Lys628 forms a Glycyl lysine isopeptide (Lys-Gly) (interchain with G-Cter in ubiquitin); in PHF-tau linkage. Glycyl lysine isopeptide (Lys-Gly) (interchain with G-Cter in ubiquitin); alternate cross-links involve residues Lys634 and Lys638. Residue Ser641 is modified to Phosphoserine. An N6-acetyllysine; alternate mark is found at Lys648, Lys660, and Lys664. Residues Lys648, Lys660, and Lys664 each participate in a glycyl lysine isopeptide (Lys-Gly) (interchain with G-Cter in ubiquitin); alternate cross-link. An N-linked (Glc) (glycation) lysine; in PHF-tau; in vitro glycan is attached at Lys664. The residue at position 666 (Arg666) is an Omega-N-methylarginine. Phosphoserine; by PHK is present on Ser669. Lys670 is a glycosylation site (N-linked (Glc) (glycation) lysine; in PHF-tau; in vitro). A Glycyl lysine isopeptide (Lys-Gly) (interchain with G-Cter in ubiquitin); in PHF-tau cross-link involves residue Lys670. Phosphoserine is present on Ser673. N-linked (Glc) (glycation) lysine; in PHF-tau; in vitro glycosylation occurs at Lys686. An N6-acetyllysine; alternate modification is found at Lys686. Lys686 is covalently cross-linked (Glycyl lysine isopeptide (Lys-Gly) (interchain with G-Cter in ubiquitin); alternate). Residue Lys692 forms a Glycyl lysine isopeptide (Lys-Gly) (interchain with G-Cter in ubiquitin) linkage. At Lys702 the chain carries N6-acetyllysine; alternate. Lys702 participates in a covalent cross-link: Glycyl lysine isopeptide (Lys-Gly) (interchain with G-Cter in ubiquitin); alternate. Tyr711 is modified (phosphotyrosine). A Phosphoserine; by CK1 and PDPK1 modification is found at Ser713. The tract at residues Val715–Ile734 is disordered. A Phosphoserine; alternate modification is found at Ser717. An O-linked (GlcNAc) serine; alternate glycan is attached at Ser717. The span at Gly718–Ser733 shows a compositional bias: polar residues. Thr720 carries the phosphothreonine modification. The residue at position 721 (Ser721) is a Phosphoserine; by CK1 and PDPK1. Position 726 is a phosphoserine (Ser726). Ser733 carries the phosphoserine; by CaMK2 and TTBK1 modification. Ser739 bears the Phosphoserine; by PDPK1 and TTBK1 mark. Thr744 is subject to Phosphothreonine; by TTBK1.

Interacts with MARK1, MARK2, MARK3 and MARK4. Interacts with PSMC2 through SQSTM1. Interacts with SQSTM1 when polyubiquitinated. Interacts with FKBP4. Binds to CSNK1D. Interacts with SGK1. Interacts with EPM2A; the interaction dephosphorylates MAPT at Ser-396. Interacts with PIN1. Interacts with LRRK2. Interacts with LRP1, leading to endocytosis; this interaction is reduced in the presence of LRPAP1/RAP. Phosphorylation at serine and threonine residues in S-P or T-P motifs by proline-directed protein kinases (PDPK1, CDK1, CDK5, GSK3, MAPK) (only 2-3 sites per protein in interphase, seven-fold increase in mitosis, and in the form associated with paired helical filaments (PHF-tau)), and at serine residues in K-X-G-S motifs by MAP/microtubule affinity-regulating kinase (MARK1, MARK2, MARK3 or MARK4), causing detachment from microtubules, and their disassembly. Phosphorylation decreases with age. Phosphorylation within tau/MAP's repeat domain or in flanking regions seems to reduce tau/MAP's interaction with, respectively, microtubules or plasma membrane components. Phosphorylation on Ser-610, Ser-622, Ser-641 and Ser-673 in several isoforms during mitosis. Phosphorylation at Ser-548 by GSK3B reduces ability to bind and stabilize microtubules. Phosphorylation at Ser-579 by BRSK1 and BRSK2 in neurons affects ability to bind microtubules and plays a role in neuron polarization. Phosphorylated at Ser-554, Ser-579, Ser-602, Ser-606 and Ser-669 by PHK. Phosphorylation at Ser-214 by SGK1 mediates microtubule depolymerization and neurite formation in hippocampal neurons. There is a reciprocal down-regulation of phosphorylation and O-GlcNAcylation. Phosphorylation on Ser-717 completely abolishes the O-GlcNAcylation on this site, while phosphorylation on Ser-713 and Ser-721 reduces glycosylation by a factor of 2 and 4 respectively. Phosphorylation on Ser-721 is reduced by about 41.5% by GlcNAcylation on Ser-717. Dephosphorylated at several serine and threonine residues by the serine/threonine phosphatase PPP5C. In terms of processing, polyubiquitinated. Requires functional TRAF6 and may provoke SQSTM1-dependent degradation by the proteasome. PHF-tau can be modified by three different forms of polyubiquitination. 'Lys-48'-linked polyubiquitination is the major form, 'Lys-6'-linked and 'Lys-11'-linked polyubiquitination also occur. Post-translationally, O-glycosylated. O-GlcNAcylation content is around 8.2%. There is reciprocal down-regulation of phosphorylation and O-GlcNAcylation. Phosphorylation on Ser-717 completely abolishes the O-GlcNAcylation on this site, while phosphorylation on Ser-713 and Ser-721 reduces O-GlcNAcylation by a factor of 2 and 4 respectively. O-GlcNAcylation on Ser-717 decreases the phosphorylation on Ser-721 by about 41.5%. Glycation of PHF-tau, but not normal brain TAU/MAPT. Glycation is a non-enzymatic post-translational modification that involves a covalent linkage between a sugar and an amino group of a protein molecule forming ketoamine. Subsequent oxidation, fragmentation and/or cross-linking of ketoamine leads to the production of advanced glycation endproducts (AGES). Glycation may play a role in stabilizing PHF aggregation leading to tangle formation in AD. In terms of tissue distribution, expressed in neurons. Isoform PNS-tau is expressed in the peripheral nervous system while the others are expressed in the central nervous system.

It localises to the cytoplasm. The protein resides in the cytosol. It is found in the cell membrane. Its subcellular location is the cytoskeleton. The protein localises to the cell projection. It localises to the axon. The protein resides in the dendrite. It is found in the secreted. Promotes microtubule assembly and stability, and might be involved in the establishment and maintenance of neuronal polarity. The C-terminus binds axonal microtubules while the N-terminus binds neural plasma membrane components, suggesting that tau functions as a linker protein between both. Axonal polarity is predetermined by TAU/MAPT localization (in the neuronal cell) in the domain of the cell body defined by the centrosome. The short isoforms allow plasticity of the cytoskeleton whereas the longer isoforms may preferentially play a role in its stabilization. This is Microtubule-associated protein tau from Homo sapiens (Human).